We begin with the raw amino-acid sequence, 732 residues long: Polyphosphate kinase (732 aa).

Asparagine 61 is an ATP binding site. Mg(2+) contacts are provided by arginine 417 and arginine 447. Residue histidine 477 is the Phosphohistidine intermediate of the active site. Tyrosine 510, arginine 606, and histidine 634 together coordinate ATP. The tract at residues 699–718 (DGTYRQRQPAPGEAERGTHS) is disordered.

Belongs to the polyphosphate kinase 1 (PPK1) family. Requires Mg(2+) as cofactor. An intermediate of this reaction is the autophosphorylated ppk in which a phosphate is covalently linked to a histidine residue through a N-P bond.

It catalyses the reaction [phosphate](n) + ATP = [phosphate](n+1) + ADP. Functionally, catalyzes the reversible transfer of the terminal phosphate of ATP to form a long-chain polyphosphate (polyP). This Thermosynechococcus vestitus (strain NIES-2133 / IAM M-273 / BP-1) protein is Polyphosphate kinase.